The following is a 92-amino-acid chain: Large ribosomal subunit protein eL37 (92 aa).

Zn(2+) contacts are provided by cysteine 19, cysteine 22, cysteine 34, and cysteine 37. The C4-type zinc-finger motif lies at cysteine 19 to cysteine 37. The segment at serine 50–histidine 92 is disordered.

This sequence belongs to the eukaryotic ribosomal protein eL37 family. It depends on Zn(2+) as a cofactor.

Functionally, binds to the 23S rRNA. This Emericella nidulans (strain FGSC A4 / ATCC 38163 / CBS 112.46 / NRRL 194 / M139) (Aspergillus nidulans) protein is Large ribosomal subunit protein eL37 (rpl37).